The following is a 138-amino-acid chain: Transcription antitermination protein NusB (138 aa).

Belongs to the NusB family.

Involved in transcription antitermination. Required for transcription of ribosomal RNA (rRNA) genes. Binds specifically to the boxA antiterminator sequence of the ribosomal RNA (rrn) operons. This is Transcription antitermination protein NusB from Desulforudis audaxviator (strain MP104C).